The following is a 147-amino-acid chain: Epididymal secretory protein E3-alpha (147 aa).

The first 25 residues, 1-25 (MTSSLKIWGILLALLCILCRLCVYS), serve as a signal peptide directing secretion.

As to expression, epididymis, with predominant expression in the corpus region. Moderately expressed in the vas deferens; only low levels are detectable in the caput and cauda regions.

The protein resides in the secreted. In terms of biological role, possible function in sperm maturation. The chain is Epididymal secretory protein E3-alpha (EDDM3A) from Homo sapiens (Human).